The primary structure comprises 1682 residues: Sodium channel protein type 7 subunit alpha (1682 aa).

At 1-117 the chain is on the cytoplasmic side; that stretch reads MLASPEPKGL…RRTTIKVLVH (117 aa). One copy of the I repeat lies at 100–401; it reads TLSPFNCIRR…ILAMAYEEEK (302 aa). The helical transmembrane segment at 118-137 threads the bilayer; sequence PFFQLFILISVLIDCVFMSL. The Extracellular portion of the chain corresponds to 138–141; the sequence is TNLP. The helical transmembrane segment at 142–167 threads the bilayer; it reads KWRPVLENTLLGIYTFEILVKLFARG. Residues 168-178 are Cytoplasmic-facing; it reads VWAGSFSFLGD. A helical transmembrane segment spans residues 179–196; that stretch reads PWNWLDFSVTVFEVIIRY. Residues 197 to 200 are Extracellular-facing; that stretch reads SPLD. The helical transmembrane segment at 201–219 threads the bilayer; sequence FIPTLQTARTLRILKIIPL. Residues 220 to 237 lie on the Cytoplasmic side of the membrane; the sequence is NQGLKSLVGVLIHCLKQL. A helical membrane pass occupies residues 238–259; sequence IGVIILTLFFLSIFSLIGMGLF. At 260–338 the chain is on the extracellular side; that stretch reads MGNLKHKCFR…PDQGFTNFDS (79 aa). An intrachain disulfide couples Cys-267 to Cys-307. 3 N-linked (GlcNAc...) asparagine glycosylation sites follow: Asn-276, Asn-281, and Asn-309. An intramembrane region (pore-forming) is located at residues 339–366; the sequence is FGWALFALFRLMAQDYPEVLYHQILYAS. Position 367 (Gly-367) is a topological domain, extracellular. A helical transmembrane segment spans residues 368 to 407; the sequence is KVYMIFFVVVSFLFSFYMASLFLGILAMAYEEEKQRVGEI. Topologically, residues 408–505 are cytoplasmic; sequence SKKIEPKFQQ…EFVHRIIMAP (98 aa). Position 442 is a phosphoserine; by PKA (Ser-442). One copy of the II repeat lies at 487–758; sequence CSPCWLKLKE…QLAVARIKKG (272 aa). A helical transmembrane segment spans residues 506–521; it reads FTDLFLIICIILNVCF. Residues 522 to 530 lie on the Extracellular side of the membrane; the sequence is LTLEHYPMS. Residues 531-559 traverse the membrane as a helical segment; the sequence is KQTNTLLNIGNLVFIGIFTAEMIFKIIAM. Residues 560-568 lie on the Cytoplasmic side of the membrane; the sequence is HPYGYFQVG. A helical transmembrane segment spans residues 569 to 586; the sequence is WNIFDSMIVFHGLIELCL. The Extracellular portion of the chain corresponds to 587–592; sequence ANVAGM. A helical transmembrane segment spans residues 593-609; that stretch reads ALLRLFRMLRIFKLGKY. The Cytoplasmic portion of the chain corresponds to 610–626; that stretch reads WPTFQILMWSLSNSWVA. A helical membrane pass occupies residues 627–655; the sequence is LKDLVLLLFTFIFFSAAFGMKLFGKNYEE. Residues 656–673 lie on the Extracellular side of the membrane; it reads FVCHIDKDCQLPRWHMHD. Cystine bridges form between Cys-658–Cys-664 and Cys-696–Cys-705. The pore-forming intramembrane region spans 674–700; sequence FFHSFLNVFRILCGEWVETLWDCMEVA. A topological domain (extracellular) is located at residue Gly-701. The chain crosses the membrane as a helical span at residues 702–732; the sequence is QSWCIPFYLMVILIGNLLVLYLFLALVSSFS. At 733 to 934 the chain is on the cytoplasmic side; the sequence is SCKDVTAEEN…KTCCKIVENN (202 aa). At Thr-777 the chain carries Phosphothreonine; by PKA. Positions 801–871 are disordered; that stretch reads TQDFLKDKEK…SKEKIKQSSS (71 aa). Residues 804-819 show a composition bias toward basic and acidic residues; it reads FLKDKEKSSGTEKNAT. The segment covering 820–834 has biased composition (polar residues); that stretch reads ENESQSLIPSPSVSE. Phosphoserine is present on Ser-843. Phosphoserine; by PKA is present on residues Ser-869 and Ser-905. Residues 916–1224 form an III repeat; the sequence is KGKIWQNIRK…RKQYRRLKKL (309 aa). The chain crosses the membrane as a helical span at residues 935–953; that stretch reads WFKCFIGLVTLLSTGTLAF. The Extracellular portion of the chain corresponds to 954-961; the sequence is EDIYMDQR. The chain crosses the membrane as a helical span at residues 962–990; sequence KTIKILLEYADMIFTYIFILEMLLKWMAY. The Cytoplasmic portion of the chain corresponds to 991–998; that stretch reads GFKAYFSN. Residues 999 to 1020 form a helical membrane-spanning segment; it reads GWYRLDFVVVIVFCLSLIGKTR. Position 1021 (Glu-1021) is a topological domain, extracellular. Residues 1022 to 1040 form a helical membrane-spanning segment; that stretch reads ELKPLISMKFLRPLRVLSQ. Residues 1041–1055 lie on the Cytoplasmic side of the membrane; sequence FERMKVVVRALIKTT. A helical transmembrane segment spans residues 1056–1080; that stretch reads LPTLNVFLVCLMIWLIFSIMGVDLF. Over 1081 to 1127 the chain is Extracellular; that stretch reads AGRFYECIDPTSGERFPSSEVMNKSRCESLLFNESMLWENAKMNFDN. Cys-1087 and Cys-1107 are oxidised to a cystine. N-linked (GlcNAc...) asparagine glycans are attached at residues Asn-1103 and Asn-1113. The pore-forming intramembrane region spans 1128–1154; that stretch reads VGNGFLSLLQVATFNGWITIMNSAIDS. Topologically, residues 1155–1167 are extracellular; it reads VAVNIQPHFEVNI. A helical transmembrane segment spans residues 1168–1202; sequence YMYCYFINFIIFGVFLPLSMLITVIIDNFNKHKIK. At 1203–1250 the chain is on the cytoplasmic side; it reads LGGSNIFITVKQRKQYRRLKKLMYEDSQRPVPRPLNKLQGFIFDVVTS. An IV repeat occupies 1233–1531; the sequence is VPRPLNKLQG…WKRFDPDRTQ (299 aa). A helical membrane pass occupies residues 1251 to 1272; it reads QAFNVIVMVLICFQAIAMMIDT. At 1273–1276 the chain is on the extracellular side; the sequence is DVQS. A helical membrane pass occupies residues 1277–1305; sequence LQMSIALYWINSIFVMLYTMECILKLIAF. Over 1306–1312 the chain is Cytoplasmic; the sequence is RCFYFTI. Residues 1313–1338 traverse the membrane as a helical segment; sequence AWNIFDFMVVIFSITGLCLPMTVGSY. Over 1339–1341 the chain is Extracellular; the sequence is LVP. A helical transmembrane segment spans residues 1342–1362; sequence PSLVQLILLSRIIHMLRLGKG. At 1363-1377 the chain is on the cytoplasmic side; that stretch reads PKVFHNLMLPLMLSL. A helical transmembrane segment spans residues 1378 to 1402; it reads PALLNIILLIFLVMFIYAVFGMYNF. Over 1403 to 1420 the chain is Extracellular; the sequence is AYVKKEAGINDVSNFETF. The segment at residues 1421–1444 is an intramembrane region (pore-forming); it reads GNSMLCLFQVAIFAGWDGMLDAIF. Topologically, residues 1445 to 1468 are extracellular; that stretch reads NSKWSDCDPDKINPGTQVRGDCGN. The cysteines at positions 1451 and 1466 are disulfide-linked. Residues 1469-1504 traverse the membrane as a helical segment; sequence PSVGIFYFVSYILISWLIIVNMYIVVVMEFLNIASK. Over 1505–1682 the chain is Cytoplasmic; that stretch reads KKNKTLSEDD…KEKSPIQSQI (178 aa).

It belongs to the sodium channel (TC 1.A.1.10) family. SCN7A subfamily. In terms of assembly, the sodium channel formed by SCN7A is probably a heterooligomeric complex consisting of the ion conducting pore forming alpha subunit SCN7A and regulatory beta subunits such as SCN3B. Interacts with ATP1A1; activates ATP1A1 and thereby indirectly signals to nearby neurons to regulate sodium homeostasis. In terms of tissue distribution, heart and uterus.

It localises to the cell membrane. It carries out the reaction Na(+)(in) = Na(+)(out). In terms of biological role, sodium leak channel functioning as an osmosensor regulating sodium ion levels in various tissues and organs. While most sodium channels are voltage-gated, SCN7A is not and lets sodium flow through membrane along its concentration gradient. In glial cells of the central nervous system, senses body-fluid sodium levels and controls salt intake behavior as well as voluntary water intake through activation of nearby neurons to maintain appropriate sodium levels in the body. By mediating sodium influx into keratinocytes, also plays a role in skin barrier homeostasis. The polypeptide is Sodium channel protein type 7 subunit alpha (Homo sapiens (Human)).